Reading from the N-terminus, the 222-residue chain is Peptide methionine sulfoxide reductase MsrA (222 aa).

The active site involves Cys-55.

It belongs to the MsrA Met sulfoxide reductase family.

It carries out the reaction L-methionyl-[protein] + [thioredoxin]-disulfide + H2O = L-methionyl-(S)-S-oxide-[protein] + [thioredoxin]-dithiol. It catalyses the reaction [thioredoxin]-disulfide + L-methionine + H2O = L-methionine (S)-S-oxide + [thioredoxin]-dithiol. Functionally, has an important function as a repair enzyme for proteins that have been inactivated by oxidation. Catalyzes the reversible oxidation-reduction of methionine sulfoxide in proteins to methionine. The polypeptide is Peptide methionine sulfoxide reductase MsrA (Streptomyces griseus subsp. griseus (strain JCM 4626 / CBS 651.72 / NBRC 13350 / KCC S-0626 / ISP 5235)).